Here is a 572-residue protein sequence, read N- to C-terminus: Arginine--tRNA ligase (572 aa).

The 'HIGH' region signature appears at 122-132; the sequence is PNLAKEMHVGH.

It belongs to the class-I aminoacyl-tRNA synthetase family. In terms of assembly, monomer.

It is found in the cytoplasm. The catalysed reaction is tRNA(Arg) + L-arginine + ATP = L-arginyl-tRNA(Arg) + AMP + diphosphate. This chain is Arginine--tRNA ligase, found in Neisseria gonorrhoeae (strain ATCC 700825 / FA 1090).